Consider the following 100-residue polypeptide: Small ribosomal subunit protein uS14 (100 aa).

Residues Cys-63, Cys-66, Cys-79, and Cys-82 each coordinate Zn(2+).

It belongs to the universal ribosomal protein uS14 family. In terms of assembly, part of the 30S ribosomal subunit. Contacts proteins S3 and S10. The cofactor is Zn(2+).

In terms of biological role, binds 16S rRNA, required for the assembly of 30S particles and may also be responsible for determining the conformation of the 16S rRNA at the A site. This Legionella pneumophila (strain Paris) protein is Small ribosomal subunit protein uS14 (rpsN).